We begin with the raw amino-acid sequence, 439 residues long: MEPSTAARAWALFWLLPPLLGAVCASGPRTLVLLDNLNVRETHSLFFRSLKDRGFELTFKTADDPSLSLIKYGEFLYDNLIIFSPSVEDFGGNINVETISAFIDGGGSVLVAASSDIGDPLRELGSECGIEFDEEKTAVIDHHNYDISDLGQHTLIVADTENLLKAPTIVGKSSLNPILFRGVGMVADPDNPLVLDILTGSSTSYSFFPDKPITQYPHAVGKNTLLIAGLQARNNARVIFSGSLDFFSDSFFNSAVQKAAPGSQRYSQTGNYELAVALSRWVFKEEGVLRVGPVSHHRVGETAPPNAYTVTDLVEYSIVIQQLSNGKWVPFDGDDIQLEFVRIDPFVRTFLKKKGGKYSVQFKLPDVYGVFQFKVDYNRLGYTHLYSSTQVSVRPLQHTQYERFIPSAYPYYASAFSMMLGLFIFSIVFLHMKEKEKSD.

The signal sequence occupies residues 1–26 (MEPSTAARAWALFWLLPPLLGAVCAS). The Lumenal portion of the chain corresponds to 27-410 (GPRTLVLLDN…YERFIPSAYP (384 aa)). Residues 411–430 (YYASAFSMMLGLFIFSIVFL) form a helical membrane-spanning segment. Residues 431-439 (HMKEKEKSD) lie on the Cytoplasmic side of the membrane.

The protein belongs to the DDOST 48 kDa subunit family. Component of the oligosaccharyltransferase (OST) complex. OST exists in two different complex forms which contain common core subunits RPN1, RPN2, OST48, OST4, DAD1 and TMEM258, either STT3A or STT3B as catalytic subunits, and form-specific accessory subunits. STT3A complex assembly occurs through the formation of 3 subcomplexes. Subcomplex 1 contains RPN1 and TMEM258, subcomplex 2 contains the STT3A-specific subunits STT3A, DC2/OSTC, and KCP2 as well as the core subunit OST4, and subcomplex 3 contains RPN2, DAD1, and OST48. The STT3A complex can form stable complexes with the Sec61 complex or with both the Sec61 and TRAP complexes. Interacts with SMIM22.

The protein localises to the endoplasmic reticulum membrane. The protein operates within protein modification; protein glycosylation. Functionally, subunit of the oligosaccharyl transferase (OST) complex that catalyzes the initial transfer of a defined glycan (Glc(3)Man(9)GlcNAc(2) in eukaryotes) from the lipid carrier dolichol-pyrophosphate to an asparagine residue within an Asn-X-Ser/Thr consensus motif in nascent polypeptide chains, the first step in protein N-glycosylation. N-glycosylation occurs cotranslationally and the complex associates with the Sec61 complex at the channel-forming translocon complex that mediates protein translocation across the endoplasmic reticulum (ER). All subunits are required for a maximal enzyme activity. Required for the assembly of both SST3A- and SS3B-containing OST complexes. The protein is Dolichyl-diphosphooligosaccharide--protein glycosyltransferase 48 kDa subunit of Pongo abelii (Sumatran orangutan).